A 166-amino-acid polypeptide reads, in one-letter code: Nucleotide-binding protein Acid_3194 (166 aa).

It belongs to the YajQ family.

In terms of biological role, nucleotide-binding protein. The sequence is that of Nucleotide-binding protein Acid_3194 from Solibacter usitatus (strain Ellin6076).